Consider the following 453-residue polypeptide: Phosphatidylserine decarboxylase proenzyme 1, mitochondrial (453 aa).

A mitochondrion-targeting transit peptide spans 1–29 (MKPRFPQNVYFLARYSYLRRFQHSQRRTF). Residues 30-74 (SSFLNNIRSNYSGARASPLGGSSGAGAGAGGGGTGDSKGNAFLVP) lie on the Mitochondrial matrix side of the membrane. The helical transmembrane segment at 75–93 (GATMATILMLGALHARRLY) threads the bilayer. Residues 94-453 (EDKKIEEKRE…GQALGRWKEE (360 aa)) lie on the Mitochondrial intermembrane side of the membrane. Catalysis depends on charge relay system; for autoendoproteolytic cleavage activity residues Asp-199, His-296, and Ser-408. The active-site Schiff-base intermediate with substrate; via pyruvic acid; for decarboxylase activity is Ser-408. Ser-408 bears the Pyruvic acid (Ser); by autocatalysis mark.

Belongs to the phosphatidylserine decarboxylase family. PSD-B subfamily. Eukaryotic type I sub-subfamily. As to quaternary structure, heterodimer of a large membrane-associated beta subunit and a small pyruvoyl-containing alpha subunit. It depends on pyruvate as a cofactor. Is synthesized initially as an inactive proenzyme. Formation of the active enzyme involves a self-maturation process in which the active site pyruvoyl group is generated from an internal serine residue via an autocatalytic post-translational modification. Two non-identical subunits are generated from the proenzyme in this reaction, and the pyruvate is formed at the N-terminus of the alpha chain, which is derived from the carboxyl end of the proenzyme. The autoendoproteolytic cleavage occurs by a canonical serine protease mechanism, in which the side chain hydroxyl group of the serine supplies its oxygen atom to form the C-terminus of the beta chain, while the remainder of the serine residue undergoes an oxidative deamination to produce ammonia and the pyruvoyl prosthetic group on the alpha chain. During this reaction, the Ser that is part of the protease active site of the proenzyme becomes the pyruvoyl prosthetic group, which constitutes an essential element of the active site of the mature decarboxylase. As to expression, expressed in roots, leaves, stems and flowers.

The protein resides in the mitochondrion. It localises to the mitochondrion inner membrane. The enzyme catalyses a 1,2-diacyl-sn-glycero-3-phospho-L-serine + H(+) = a 1,2-diacyl-sn-glycero-3-phosphoethanolamine + CO2. It functions in the pathway phospholipid metabolism; phosphatidylethanolamine biosynthesis; phosphatidylethanolamine from CDP-diacylglycerol: step 2/2. Its function is as follows. Catalyzes the formation of phosphatidylethanolamine (PtdEtn) from phosphatidylserine (PtdSer). Plays a central role in phospholipid metabolism and in the interorganelle trafficking of phosphatidylserine. Contributes only to a minor proportion of PtdEtn production. In Arabidopsis thaliana (Mouse-ear cress), this protein is Phosphatidylserine decarboxylase proenzyme 1, mitochondrial (PSD1).